Here is a 193-residue protein sequence, read N- to C-terminus: dCTP deaminase, dUMP-forming (193 aa).

DCTP is bound by residues 107 to 112 (RSSLGR), D125, 133 to 135 (TLE), Q154, and Y168. The active-site Proton donor/acceptor is the E135. Residues 169–193 (AESSGKYHGDERPSPSKMHLDFCRG) are disordered. Residues 173-193 (GKYHGDERPSPSKMHLDFCRG) are compositionally biased toward basic and acidic residues.

It belongs to the dCTP deaminase family. Homotrimer.

It carries out the reaction dCTP + 2 H2O = dUMP + NH4(+) + diphosphate. It functions in the pathway pyrimidine metabolism; dUMP biosynthesis; dUMP from dCTP: step 1/1. Bifunctional enzyme that catalyzes both the deamination of dCTP to dUTP and the hydrolysis of dUTP to dUMP without releasing the toxic dUTP intermediate. The protein is dCTP deaminase, dUMP-forming of Methanopyrus kandleri (strain AV19 / DSM 6324 / JCM 9639 / NBRC 100938).